The following is a 255-amino-acid chain: Ribonuclease HII (255 aa).

An RNase H type-2 domain is found at 72 to 255 (QYIAGIDEAG…RSFAPVKAHE (184 aa)). A divalent metal cation contacts are provided by aspartate 78, glutamate 79, and aspartate 170.

The protein belongs to the RNase HII family. Mn(2+) serves as cofactor. It depends on Mg(2+) as a cofactor.

The protein localises to the cytoplasm. The enzyme catalyses Endonucleolytic cleavage to 5'-phosphomonoester.. Functionally, endonuclease that specifically degrades the RNA of RNA-DNA hybrids. The sequence is that of Ribonuclease HII from Bacillus licheniformis (strain ATCC 14580 / DSM 13 / JCM 2505 / CCUG 7422 / NBRC 12200 / NCIMB 9375 / NCTC 10341 / NRRL NRS-1264 / Gibson 46).